Here is a 181-residue protein sequence, read N- to C-terminus: Cytochrome P450 monooxygenase dtpC (181 aa).

C125 contributes to the heme binding site.

The protein belongs to the cytochrome P450 family. Requires heme as cofactor.

The protein operates within alkaloid biosynthesis. It participates in secondary metabolite biosynthesis. Functionally, cytochrome P450 monooxygenase; part of the gene cluster that mediates the biosynthesis of the dimeric diketopiperazine alkaloid ditryptophenaline. The nonribosomal peptide synthase dtpA accepts L-tryptophan and L-phenylalanine as its substrates and forms the phenylalanyl-tryptophanyl cyclic dipeptide product cyclophenylalanyltryptophenyl. The N-methyltransferase dtpB is responsible for the N-methylation of cyclophenylalanyltryptophenyl to yield cyclo-N-methylphenylalanyltryptophenyl. The cytochrome P450 monooxygenase is responsible not only for pyrroloindole ring formation but also for concurrent dimerization of N-methylphenylalanyltryptophanyl diketopiperazine monomers into a homodimeric product. The polypeptide is Cytochrome P450 monooxygenase dtpC (Aspergillus flavus (strain ATCC 200026 / FGSC A1120 / IAM 13836 / NRRL 3357 / JCM 12722 / SRRC 167)).